A 165-amino-acid chain; its full sequence is uncharacterized protein (165 aa).

A helical membrane pass occupies residues 15–35; it reads MSPAIILIGVLILIVLFVIKF. Residues 67 to 119 adopt a coiled-coil conformation; that stretch reads ISQLNTLRATLAAKKKELKTLRTARKKECTEQLAKTQAEVDRIQAKIDNFSSR. A disordered region spans residues 123-156; it reads VPLPGGEVGPPYNPPPPRTNTRPNPRPNPRPAQL. The span at 133–154 shows a compositional bias: pro residues; sequence PYNPPPPRTNTRPNPRPNPRPA.

It is found in the membrane. This is an uncharacterized protein from Acheta domesticus (House cricket).